The primary structure comprises 714 residues: Forkhead box protein P2 (714 aa).

A compositionally biased stretch (polar residues) spans 1–28 (MMQESATETISNSSMNQNGMSTLSSQLD). Disordered stretches follow at residues 1-45 (MMQE…SEVS) and 284-338 (KHGG…TGAS). Positions 291 to 304 (TTNNSSSTTSSTTS) are enriched in low complexity. A compositionally biased stretch (polar residues) spans 314 to 323 (SIVNGQSSVL). The segment covering 325–336 (ARRDSSSHEETG) has biased composition (basic and acidic residues). The C2H2-type zinc finger occupies 345-370 (GVCKWPGCESICEDFGQFLKHLNNEH). Positions 387-408 (VQQLEIQLSKERERLQAMMTHL) are leucine-zipper. The segment at 421–425 (PLNLV) is CTBP1-binding. Over residues 437 to 458 (TSPQSLPQTPTTPTAPVTPITQ) the composition is skewed to low complexity. A disordered region spans residues 437-464 (TSPQSLPQTPTTPTAPVTPITQGPSVIT). A DNA-binding region (fork-head) is located at residues 503–593 (RPPFTYATLI…SQKITGSPTL (91 aa)). Disordered regions lie at residues 648 to 667 (LDHI…QPHI) and 677 to 714 (VIAE…EDLE). The span at 698 to 714 (LEDDREIEEEPLSEDLE) shows a compositional bias: acidic residues.

Forms homodimers and heterodimers with FOXP1 and FOXP4. Dimerization is required for DNA-binding. Interacts with CTBP1. Interacts with FOXP1. Interacts with TBR1. Interacts with ZMYM2.

The protein resides in the nucleus. Its function is as follows. Transcriptional repressor that may play a role in the specification and differentiation of lung epithelium. May also play a role in developing neural, gastrointestinal and cardiovascular tissues. Can act with CTBP1 to synergistically repress transcription but CTPBP1 is not essential. Plays a role in synapse formation by regulating SRPX2 levels. In Macaca mulatta (Rhesus macaque), this protein is Forkhead box protein P2 (FOXP2).